A 292-amino-acid polypeptide reads, in one-letter code: Small ribosomal subunit protein uS2 (292 aa).

Residues 265–292 (TETALDWSDEPVAGDWAAEPAADAQGGW) are disordered. Low complexity predominate over residues 277–292 (AGDWAAEPAADAQGGW).

Belongs to the universal ribosomal protein uS2 family. As to quaternary structure, component of the small ribosomal subunit. Mature ribosomes consist of a small (40S) and a large (60S) subunit. The 40S subunit contains about 33 different proteins and 1 molecule of RNA (18S). The 60S subunit contains about 49 different proteins and 3 molecules of RNA (25S, 5.8S and 5S). Interacts with RPS21.

It localises to the cytoplasm. Required for the assembly and/or stability of the 40S ribosomal subunit. Required for the processing of the 20S rRNA-precursor to mature 18S rRNA in a late step of the maturation of 40S ribosomal subunits. The sequence is that of Small ribosomal subunit protein uS2 from Cryptococcus neoformans var. neoformans serotype D (strain B-3501A) (Filobasidiella neoformans).